A 151-amino-acid polypeptide reads, in one-letter code: Glutamate mutase sigma subunit 1 (151 aa).

Residues 7–140 (PRTVILGVIG…EMLREDLQLT (134 aa)) enclose the B12-binding domain. Adenosylcob(III)alamin contacts are provided by residues 17 to 21 (SDAHV), histidine 20, 65 to 67 (SSL), and 96 to 100 (NLAVG).

This sequence belongs to the methylaspartate mutase GlmS subunit family. As to quaternary structure, heterotetramer composed of 2 epsilon subunits (GlmE) and 2 sigma subunits (GlmS). GlmE exists as a homodimer and GlmS as a monomer. Requires adenosylcob(III)alamin as cofactor.

It catalyses the reaction (2S,3S)-3-methyl-L-aspartate = L-glutamate. It participates in amino-acid degradation; L-glutamate degradation via mesaconate pathway; acetate and pyruvate from L-glutamate: step 1/4. In terms of biological role, catalyzes the carbon skeleton rearrangement of L-glutamate to L-threo-3-methylaspartate ((2S,3S)-3-methylaspartate). The sequence is that of Glutamate mutase sigma subunit 1 from Haloarcula marismortui (strain ATCC 43049 / DSM 3752 / JCM 8966 / VKM B-1809) (Halobacterium marismortui).